The sequence spans 686 residues: Methionine--tRNA ligase (686 aa).

The 'HIGH' region motif lies at 15-25 (PYANGSIHLGH). 4 residues coordinate Zn(2+): cysteine 146, cysteine 149, cysteine 159, and cysteine 162. Residues 332-336 (KMSKS) carry the 'KMSKS' region motif. Lysine 335 is an ATP binding site. The region spanning 585–686 (AFEAVDMRIA…EGAQPGMRVM (102 aa)) is the tRNA-binding domain.

The protein belongs to the class-I aminoacyl-tRNA synthetase family. MetG type 1 subfamily. Homodimer. Zn(2+) is required as a cofactor.

It localises to the cytoplasm. It carries out the reaction tRNA(Met) + L-methionine + ATP = L-methionyl-tRNA(Met) + AMP + diphosphate. Its function is as follows. Is required not only for elongation of protein synthesis but also for the initiation of all mRNA translation through initiator tRNA(fMet) aminoacylation. This Aliivibrio fischeri (strain ATCC 700601 / ES114) (Vibrio fischeri) protein is Methionine--tRNA ligase.